Reading from the N-terminus, the 305-residue chain is Plant-type L-asparaginase (305 aa).

The Nucleophile role is filled by Thr175. Substrate-binding positions include 202-205 (RVGD) and 224-227 (TGLG).

It belongs to the Ntn-hydrolase family. As to quaternary structure, heterotetramer of two alpha and two beta chains arranged as a dimer of alpha/beta heterodimers. In terms of processing, autocleaved. Generates the alpha and beta subunits. The N-terminal residue of the beta subunit is thought to be responsible for the nucleophile hydrolase activity.

It catalyses the reaction L-asparagine + H2O = L-aspartate + NH4(+). Functionally, catalyzes the hydrolysis of L-asparagine into L-aspartate and ammonia. This Pyrococcus horikoshii (strain ATCC 700860 / DSM 12428 / JCM 9974 / NBRC 100139 / OT-3) protein is Plant-type L-asparaginase.